The following is a 719-amino-acid chain: uncharacterized protein (719 aa).

A coiled-coil region spans residues 64–100 (IQNLNQRKEEVIRLIAEQDKLTDNLKRKIEQSVKLQE). In terms of domain architecture, S1 motif spans 649–718 (GMELQGTVRN…QKGRVSLSMV (70 aa)).

This is an uncharacterized protein from Bacillus subtilis (strain 168).